A 238-amino-acid chain; its full sequence is Probable xyloglucan-specific endo-beta-1,4-glucanase A (238 aa).

A signal peptide spans 1–18 (MKFSLSVALSLAAATAQA). 2 N-linked (GlcNAc...) asparagine glycosylation sites follow: Asn-106 and Asn-171.

Belongs to the glycosyl hydrolase 12 (cellulase H) family.

The protein localises to the secreted. It carries out the reaction xyloglucan + H2O = xyloglucan oligosaccharides.. Its function is as follows. Catalyzes endohydrolysis of 1,4-beta-D-glucosidic linkages in xyloglucan with retention of the beta-configuration of the glycosyl residues. Specific for xyloglucan and does not hydrolyze other cell wall components. This Neosartorya fischeri (strain ATCC 1020 / DSM 3700 / CBS 544.65 / FGSC A1164 / JCM 1740 / NRRL 181 / WB 181) (Aspergillus fischerianus) protein is Probable xyloglucan-specific endo-beta-1,4-glucanase A (xgeA).